The primary structure comprises 229 residues: Indole-3-glycerol phosphate synthase (229 aa).

Belongs to the TrpC family.

It carries out the reaction 1-(2-carboxyphenylamino)-1-deoxy-D-ribulose 5-phosphate + H(+) = (1S,2R)-1-C-(indol-3-yl)glycerol 3-phosphate + CO2 + H2O. It functions in the pathway amino-acid biosynthesis; L-tryptophan biosynthesis; L-tryptophan from chorismate: step 4/5. The chain is Indole-3-glycerol phosphate synthase from Pyrococcus abyssi (strain GE5 / Orsay).